The sequence spans 254 residues: 4-hydroxy-tetrahydrodipicolinate reductase (254 aa).

7-12 (GASGRI) contributes to the NAD(+) binding site. Arg35 contacts NADP(+). Residues 91-93 (GTT) and 115-118 (AHNM) each bind NAD(+). Catalysis depends on His147, which acts as the Proton donor/acceptor. Residue His148 participates in (S)-2,3,4,5-tetrahydrodipicolinate binding. Lys151 (proton donor) is an active-site residue. (S)-2,3,4,5-tetrahydrodipicolinate is bound at residue 157-158 (GT).

Belongs to the DapB family.

The protein localises to the cytoplasm. It catalyses the reaction (S)-2,3,4,5-tetrahydrodipicolinate + NAD(+) + H2O = (2S,4S)-4-hydroxy-2,3,4,5-tetrahydrodipicolinate + NADH + H(+). The catalysed reaction is (S)-2,3,4,5-tetrahydrodipicolinate + NADP(+) + H2O = (2S,4S)-4-hydroxy-2,3,4,5-tetrahydrodipicolinate + NADPH + H(+). The protein operates within amino-acid biosynthesis; L-lysine biosynthesis via DAP pathway; (S)-tetrahydrodipicolinate from L-aspartate: step 4/4. In terms of biological role, catalyzes the conversion of 4-hydroxy-tetrahydrodipicolinate (HTPA) to tetrahydrodipicolinate. The sequence is that of 4-hydroxy-tetrahydrodipicolinate reductase from Helicobacter acinonychis (strain Sheeba).